Reading from the N-terminus, the 365-residue chain is Phosphoserine aminotransferase (365 aa).

An L-glutamate-binding site is contributed by Arg42. Pyridoxal 5'-phosphate contacts are provided by residues 76-77, Trp102, Thr156, Asp175, and Gln198; that span reads GR. Lys199 bears the N6-(pyridoxal phosphate)lysine mark. 240 to 241 contributes to the pyridoxal 5'-phosphate binding site; sequence NT.

Belongs to the class-V pyridoxal-phosphate-dependent aminotransferase family. SerC subfamily. Homodimer. Requires pyridoxal 5'-phosphate as cofactor.

The protein localises to the cytoplasm. The catalysed reaction is O-phospho-L-serine + 2-oxoglutarate = 3-phosphooxypyruvate + L-glutamate. It catalyses the reaction 4-(phosphooxy)-L-threonine + 2-oxoglutarate = (R)-3-hydroxy-2-oxo-4-phosphooxybutanoate + L-glutamate. It functions in the pathway amino-acid biosynthesis; L-serine biosynthesis; L-serine from 3-phospho-D-glycerate: step 2/3. Its pathway is cofactor biosynthesis; pyridoxine 5'-phosphate biosynthesis; pyridoxine 5'-phosphate from D-erythrose 4-phosphate: step 3/5. Functionally, catalyzes the reversible conversion of 3-phosphohydroxypyruvate to phosphoserine and of 3-hydroxy-2-oxo-4-phosphonooxybutanoate to phosphohydroxythreonine. The protein is Phosphoserine aminotransferase of Shewanella oneidensis (strain ATCC 700550 / JCM 31522 / CIP 106686 / LMG 19005 / NCIMB 14063 / MR-1).